A 161-amino-acid polypeptide reads, in one-letter code: uncharacterized protein (161 aa).

The protein to R.leguminosarum PsiB.

This is an uncharacterized protein from Sinorhizobium fredii (strain NBRC 101917 / NGR234).